The following is a 449-amino-acid chain: Intestinal acid phosphatase (449 aa).

Residues 1-19 (MVSAISIVAIFALEGFVTT) form the signal peptide. Topologically, residues 20–428 (YSDGTKDLVF…TDLNKSSSFA (409 aa)) are extracellular. His36 acts as the Nucleophile in catalysis. Residue Asp321 is the Proton donor of the active site. A helical membrane pass occupies residues 429–449 (TVSMLFIAAILAINNNFLGLF).

This sequence belongs to the histidine acid phosphatase family. Homodimer. Post-translationally, the N-terminus is blocked. Expressed in the intestine, specifically on the edge of the gut lumen, in the 14 posterior cells of the intestine.

It is found in the membrane. The enzyme catalyses a phosphate monoester + H2O = an alcohol + phosphate. Functionally, acid phosphatase required for normal growth and development. Specifically required for normal gut differentiation. This Caenorhabditis elegans protein is Intestinal acid phosphatase.